A 140-amino-acid chain; its full sequence is UPF0179 protein Msp_0996 (140 aa).

This sequence belongs to the UPF0179 family.

This Methanosphaera stadtmanae (strain ATCC 43021 / DSM 3091 / JCM 11832 / MCB-3) protein is UPF0179 protein Msp_0996.